A 1228-amino-acid polypeptide reads, in one-letter code: S-layer protein (1228 aa).

The signal sequence occupies residues 1-30 (MDRKKAVKLATASAIAASAFVAANPNASEA).

The protein resides in the secreted. It localises to the cell wall. The protein localises to the S-layer. The S-layer is a paracrystalline mono-layered assembly of proteins which coat the surface of bacteria. The polypeptide is S-layer protein (sbsA) (Geobacillus stearothermophilus (Bacillus stearothermophilus)).